Reading from the N-terminus, the 440-residue chain is Golgi-associated RAB2 interactor protein 2 (440 aa).

This sequence belongs to the GARIN family. In terms of assembly, interacts with CALM1. In terms of tissue distribution, expressed in testis (at protein level).

The protein resides in the cell projection. It is found in the cilium. Its subcellular location is the flagellum. Functionally, seems to play a role in sperm motility. The chain is Golgi-associated RAB2 interactor protein 2 from Mus musculus (Mouse).